We begin with the raw amino-acid sequence, 163 residues long: MKTLDKITNYDLFDFADEFLKFVPVFRPNPTVTCLFGNPLTNLLVNGTGAACFFEFCSLALIKVSKILLDLLLLALLIDSENELCFEIDGDWLCVLGFGEGDLEVGRSLGMALPDDDVLLSITFWFLCNSSFSILFVFELRIFLRTVNNLLVVFLSVLKRNDL.

Topologically, residues 1–33 (MKTLDKITNYDLFDFADEFLKFVPVFRPNPTVT) are cytoplasmic. A helical membrane pass occupies residues 34–54 (CLFGNPLTNLLVNGTGAACFF). The Extracellular portion of the chain corresponds to 55-117 (EFCSLALIKV…SLGMALPDDD (63 aa)). The helical transmembrane segment at 118 to 138 (VLLSITFWFLCNSSFSILFVF) threads the bilayer. At 139–163 (ELRIFLRTVNNLLVVFLSVLKRNDL) the chain is on the cytoplasmic side.

The protein localises to the membrane. This is an uncharacterized protein from Saccharomyces cerevisiae (strain ATCC 204508 / S288c) (Baker's yeast).